Consider the following 290-residue polypeptide: GTPase Era (290 aa).

Residues 2-167 (KSGFVSIVGR…LDELVKYLPE (166 aa)) enclose the Era-type G domain. The interval 10-17 (GRTNAGKS) is G1. 10 to 17 (GRTNAGKS) is a binding site for GTP. Residues 36–40 (NATRR) form a G2 region. The interval 57–60 (DTPG) is G3. Residues 57-61 (DTPGL) and 116-119 (NKVD) contribute to the GTP site. Residues 116 to 119 (NKVD) are G4. A G5 region spans residues 146–148 (YSI). The KH type-2 domain occupies 194-274 (IYENLSDEIP…MLKLFVQLEK (81 aa)).

It belongs to the TRAFAC class TrmE-Era-EngA-EngB-Septin-like GTPase superfamily. Era GTPase family. Monomer.

It localises to the cytoplasm. Its subcellular location is the cell inner membrane. Functionally, an essential GTPase that binds both GDP and GTP, with rapid nucleotide exchange. Plays a role in 16S rRNA processing and 30S ribosomal subunit biogenesis and possibly also in cell cycle regulation and energy metabolism. This chain is GTPase Era, found in Campylobacter lari (strain RM2100 / D67 / ATCC BAA-1060).